We begin with the raw amino-acid sequence, 436 residues long: Ribosomal protein uS12 methylthiotransferase RimO (436 aa).

An MTTase N-terminal domain is found at 2–114 (PNLYLVSLGC…IDEMILKKQN (113 aa)). [4Fe-4S] cluster contacts are provided by C11, C45, C77, C146, C150, and C153. The 232-residue stretch at 132 to 363 (TGSSYHAYIK…IKKQIEGSFK (232 aa)) folds into the Radical SAM core domain. Positions 363–434 (KSLVGEVIKV…KDKLIGEIIC (72 aa)) constitute a TRAM domain.

Belongs to the methylthiotransferase family. RimO subfamily. The cofactor is [4Fe-4S] cluster.

The protein localises to the cytoplasm. It catalyses the reaction L-aspartate(89)-[ribosomal protein uS12]-hydrogen + (sulfur carrier)-SH + AH2 + 2 S-adenosyl-L-methionine = 3-methylsulfanyl-L-aspartate(89)-[ribosomal protein uS12]-hydrogen + (sulfur carrier)-H + 5'-deoxyadenosine + L-methionine + A + S-adenosyl-L-homocysteine + 2 H(+). Its function is as follows. Catalyzes the methylthiolation of an aspartic acid residue of ribosomal protein uS12. The protein is Ribosomal protein uS12 methylthiotransferase RimO of Campylobacter fetus subsp. fetus (strain 82-40).